Reading from the N-terminus, the 723-residue chain is Enolase-phosphatase E1 (723 aa).

Substrate-binding positions include serine 126–serine 127 and lysine 160. Residues glycine 239–serine 723 form a disordered region. 2 stretches are compositionally biased toward basic and acidic residues: residues valine 262–alanine 284 and alanine 293–valine 308. Over residues alanine 311–aspartate 320 the composition is skewed to low complexity. Composition is skewed to basic and acidic residues over residues alanine 322–glutamate 406, alanine 419–glutamate 443, glutamate 468–alanine 479, threonine 487–alanine 496, serine 511–glutamate 565, and valine 577–alanine 593. Composition is skewed to low complexity over residues valine 596 to glutamate 606 and asparagine 636 to valine 647. Basic and acidic residues predominate over residues glycine 653–aspartate 666.

The protein belongs to the HAD-like hydrolase superfamily. MasA/MtnC family. Monomer.

It is found in the cytoplasm. The protein localises to the nucleus. It carries out the reaction 5-methylsulfanyl-2,3-dioxopentyl phosphate + H2O = 1,2-dihydroxy-5-(methylsulfanyl)pent-1-en-3-one + phosphate. It functions in the pathway amino-acid biosynthesis; L-methionine biosynthesis via salvage pathway; L-methionine from S-methyl-5-thio-alpha-D-ribose 1-phosphate: step 3/6. The protein operates within amino-acid biosynthesis; L-methionine biosynthesis via salvage pathway; L-methionine from S-methyl-5-thio-alpha-D-ribose 1-phosphate: step 4/6. Functionally, bifunctional enzyme that catalyzes the enolization of 2,3-diketo-5-methylthiopentyl-1-phosphate (DK-MTP-1-P) into the intermediate 2-hydroxy-3-keto-5-methylthiopentenyl-1-phosphate (HK-MTPenyl-1-P), which is then dephosphorylated to form the acireductone 1,2-dihydroxy-3-keto-5-methylthiopentene (DHK-MTPene). The sequence is that of Enolase-phosphatase E1 from Culex quinquefasciatus (Southern house mosquito).